The following is a 612-amino-acid chain: Baculoviral IAP repeat-containing protein 2 (612 aa).

A BIR 1 repeat occupies 46–113 (ELYRMSTYSA…RQFYPSCSFV (68 aa)). An Omega-N-methylarginine modification is found at arginine 143. Serine 153 is modified (phosphoserine). BIR repeat units lie at residues 177–243 (EEAR…CPFL) and 262–329 (HSAR…CEFL). Zn(2+)-binding residues include cysteine 299, cysteine 302, histidine 319, and cysteine 326. In terms of domain architecture, CARD spans 447–537 (MASGDLSLIR…TLYENLFVEK (91 aa)). An RING-type zinc finger spans residues 565–600 (CKVCMDREVSIVFIPCGHLVVCQECAPSLRKCPICR).

Belongs to the IAP family. Interacts with DIABLO/SMAC and with PRSS25; these interactions inhibit apoptotic suppressor activity. Interacts with CASP9. Interacts (via BIR domains) with TRAF2; the interaction is required for IKBKE ubiquitination. Interacts with E2F1, RIPK1, RIPK2, RIPK3, RIPK4, BIRC5/survivin and USP19. Interacts with HSP90AB1. Interacts with several death receptors, inclusing FAS, TNFRSF10A and TNFRSF10B. Recruited to TNFRSF10B in the absence of receptor stimulation. When TNFRSF10B is stimulated, further recruited to the receptor and cleaved by caspases. Proteolytic fragments remain associated with TNFRSF10B. Post-translationally, auto-ubiquitinated and degraded by the proteasome in apoptotic cells. Upon stimulation of death receptors, including TNFRSF10B, recruited to receptors and cleaved by caspases. Proteolytic fragments remain associated with the receptors. This cleavage presumably inactivates the protein. As to expression, expressed in heart, brain, spleen, lung, liver, skeletal muscle, kidney and testis.

Its subcellular location is the cytoplasm. It is found in the nucleus. It catalyses the reaction S-ubiquitinyl-[E2 ubiquitin-conjugating enzyme]-L-cysteine + [acceptor protein]-L-lysine = [E2 ubiquitin-conjugating enzyme]-L-cysteine + N(6)-ubiquitinyl-[acceptor protein]-L-lysine.. Its activity is regulated as follows. The CARD domain inhibits the activation of E3 ubiquitin ligase activity by preventing RING domain dimerization and E2 ubiquitin donor binding and activation. The CARD domain-mediated autoinhibition of the E3 ubiquitin-protein ligase activity suppresses cell proliferation and migration. USP19 regulates the stability of BIRC2/c-IAP1 by preventing its ubiquitination. Multi-functional protein which regulates not only caspases and apoptosis, but also modulates inflammatory signaling and immunity, mitogenic kinase signaling, and cell proliferation, as well as cell invasion and metastasis. Acts as an E3 ubiquitin-protein ligase regulating NF-kappa-B signaling and regulates both canonical and non-canonical NF-kappa-B signaling by acting in opposite directions: acts as a positive regulator of the canonical pathway and suppresses constitutive activation of non-canonical NF-kappa-B signaling. The target proteins for its E3 ubiquitin-protein ligase activity include: RIPK1, RIPK2, RIPK3, RIPK4, CASP3, CASP7, CASP8, TRAF2, DIABLO/SMAC, MAP3K14/NIK, MAP3K5/ASK1, IKBKG/NEMO, IKBKE and MXD1/MAD1. Can also function as an E3 ubiquitin-protein ligase of the NEDD8 conjugation pathway, targeting effector caspases for neddylation and inactivation. Acts as an important regulator of innate immune signaling via regulation of Toll-like receptors (TLRs), Nodlike receptors (NLRs) and RIG-I like receptors (RLRs), collectively referred to as pattern recognition receptors (PRRs). Protects cells from spontaneous formation of the ripoptosome, a large multi-protein complex that has the capability to kill cancer cells in a caspase-dependent and caspase-independent manner. Suppresses ripoptosome formation by ubiquitinating RIPK1 and CASP8. Can stimulate the transcriptional activity of E2F1. Plays a role in the modulation of the cell cycle. The sequence is that of Baculoviral IAP repeat-containing protein 2 (Birc2) from Mus musculus (Mouse).